The chain runs to 380 residues: Cytochrome b (380 aa).

Transmembrane regions (helical) follow at residues 34–54 (FGSL…LLAM), 78–99 (WLIR…YLHI), 114–134 (WNTG…GYVL), and 179–199 (FFAL…IHLT). Residues His-84 and His-98 each coordinate heme b. The heme b site is built by His-183 and His-197. A ubiquinone is bound at residue His-202. Helical transmembrane passes span 227–247 (TKDI…AMFA), 289–309 (LGGV…PFLH), 321–341 (LSQL…WIGS), and 348–368 (FIIT…ILFP).

It belongs to the cytochrome b family. As to quaternary structure, the cytochrome bc1 complex contains 11 subunits: 3 respiratory subunits (MT-CYB, CYC1 and UQCRFS1), 2 core proteins (UQCRC1 and UQCRC2) and 6 low-molecular weight proteins (UQCRH/QCR6, UQCRB/QCR7, UQCRQ/QCR8, UQCR10/QCR9, UQCR11/QCR10 and a cleavage product of UQCRFS1). This cytochrome bc1 complex then forms a dimer. It depends on heme b as a cofactor.

Its subcellular location is the mitochondrion inner membrane. Component of the ubiquinol-cytochrome c reductase complex (complex III or cytochrome b-c1 complex) that is part of the mitochondrial respiratory chain. The b-c1 complex mediates electron transfer from ubiquinol to cytochrome c. Contributes to the generation of a proton gradient across the mitochondrial membrane that is then used for ATP synthesis. The chain is Cytochrome b (MT-CYB) from Aphanotriccus audax (Black-billed flycatcher).